The primary structure comprises 473 residues: Protein translocase subunit SecD (473 aa).

The next 6 helical transmembrane spans lie at 5–25 (VLVKWAVILVALFASVYLLYP), 316–336 (ASLYGIVIILILMAIYYKSGG), 337–357 (IISNIALILNLVFLLAAMAAF), 364–384 (PGIAGIILSLAMAIDANVLIL), 409–429 (WSAIFDSNFTSWIVALFLFQF), and 436–456 (GFAVTLTLGLLIGVFTSVFVT).

It belongs to the SecD/SecF family. SecD subfamily. Forms a complex with SecF. Part of the essential Sec protein translocation apparatus which comprises SecA, SecYEG and auxiliary proteins SecDF. Other proteins may also be involved.

The protein resides in the cell inner membrane. Functionally, part of the Sec protein translocase complex. Interacts with the SecYEG preprotein conducting channel. SecDF uses the proton motive force (PMF) to complete protein translocation after the ATP-dependent function of SecA. The protein is Protein translocase subunit SecD of Elusimicrobium minutum (strain Pei191).